We begin with the raw amino-acid sequence, 67 residues long: Large ribosomal subunit protein eL24 (67 aa).

Zn(2+) is bound by residues Cys7, Cys10, Cys33, and Cys37. The segment at 7 to 37 (CSYCGKPFEPGTGKMFVRNDGRVLFFCSRKC) adopts a C4-type zinc-finger fold.

Belongs to the eukaryotic ribosomal protein eL24 family. As to quaternary structure, part of the 50S ribosomal subunit. Forms a cluster with proteins L3 and L14. Zn(2+) is required as a cofactor.

Binds to the 23S rRNA. This is Large ribosomal subunit protein eL24 from Pyrococcus abyssi (strain GE5 / Orsay).